A 142-amino-acid chain; its full sequence is Nucleoside diphosphate kinase (142 aa).

Residues K10, F58, R86, T92, R103, and N113 each coordinate ATP. Catalysis depends on H116, which acts as the Pros-phosphohistidine intermediate.

The protein belongs to the NDK family. As to quaternary structure, homotetramer. Requires Mg(2+) as cofactor.

It is found in the cytoplasm. The enzyme catalyses a 2'-deoxyribonucleoside 5'-diphosphate + ATP = a 2'-deoxyribonucleoside 5'-triphosphate + ADP. It carries out the reaction a ribonucleoside 5'-diphosphate + ATP = a ribonucleoside 5'-triphosphate + ADP. In terms of biological role, major role in the synthesis of nucleoside triphosphates other than ATP. The ATP gamma phosphate is transferred to the NDP beta phosphate via a ping-pong mechanism, using a phosphorylated active-site intermediate. The polypeptide is Nucleoside diphosphate kinase (Ehrlichia chaffeensis (strain ATCC CRL-10679 / Arkansas)).